A 66-amino-acid chain; its full sequence is Large ribosomal subunit protein eL29 (66 aa).

Polar residues predominate over residues 1 to 14 (MAKSKNSTNKNQIS). The segment at 1 to 66 (MAKSKNSTNK…KNLEKKVNKE (66 aa)) is disordered. Residues 15–31 (KSHRNGIKKPKDHRHIS) show a composition bias toward basic residues. Residues 47–66 (IKNDPSIKKSKNLEKKVNKE) show a composition bias toward basic and acidic residues.

The protein belongs to the eukaryotic ribosomal protein eL29 family.

Its subcellular location is the cytoplasm. This chain is Large ribosomal subunit protein eL29 (RPL29), found in Tetrahymena thermophila.